The following is a 553-amino-acid chain: MIQRLWASRLLRHRKAQLLLVNLLTFGLEVCLAAGITYVPPLLLEVGVEEKFMTMVLGIGPVLGLVSVPLLGSASDQWRGRYGRRRPFIWALSLGVLLSLFLIPRAGWLAGLLYPDTRPLELALLILGVGLLDFCGQVCFTPLEALLSDLFRDPDHCRQAFSVYAFMISLGGCLGYLLPAIDWDTSVLAPYLGTQEECLFGLLTLIFLICMAATLFVTEEAVLGPPEPAEGLLVSAVSRRCCPCHVGLAFRNLGTLFPRLQQLCCRMPRTLRRLFVAELCSWMALMTFTLFYTDFVGEGLYQGVPRAEPGTEARRHYDEGIRMGSLGLFLQCAISLVFSLVMDRLVQKFGTRSVYLASVMTFPVAAAATCLSHSVVVVTASAALTGFTFSALQILPYTLASLYHREKQVFLPKYRGDAGGSSGEDSQTTSFLPGPKPGALFPNGHVGSGSSGILAPPPALCGASACDVSMRVVVGEPPEARVVTGRGICLDLAILDSAFLLSQVAPSLFMGSIVQLSHSVTAYMVSAAGLGLVAIYFATQVVFDKNDLAKYSV.

Transmembrane regions (helical) follow at residues 19–39 (LLVN…ITYV), 52–72 (FMTM…PLLG), 88–108 (FIWA…RAGW), 120–140 (LELA…QVCF), 161–181 (FSVY…LPAI), 198–218 (CLFG…LFVT), 275–295 (FVAE…YTDF), 323–343 (MGSL…LVMD), 353–373 (SVYL…CLSH), 382–402 (AALT…LASL), and 522–542 (AYMV…TQVV).

Belongs to the glycoside-pentoside-hexuronide (GPH) cation symporter transporter (TC 2.A.2) family. As to expression, expressed in the epididymis. Primarily expressed in the prostate, but also in other tissues.

Its subcellular location is the membrane. It catalyses the reaction sucrose(out) + H(+)(out) = sucrose(in) + H(+)(in). Functionally, proton-associated sucrose transporter. May be able to transport also glucose and fructose. This Mus musculus (Mouse) protein is Solute carrier family 45 member 3 (Slc45a3).